A 537-amino-acid chain; its full sequence is MRLSTSALVLGAASSAVAFDQKVLGDLKKPAIDLDLSSWLNFGEEITAEAKAVWEEVSMLAPDAVEAFKKQVIGTKPKKANRRPDNHWDHVVKGADVQSIWVDKNNEKHRKVGGRLDNYNLRAKKVDPSKLGVDKVKQYSGYLDDEEQDKHLFYWFFESRNDPENDPVVLWLNGGPGCSSLTGLFLELGPASINKKIEIVNNPWSWNNNASVIFLDQPVNVGYSYSGGSVSNTVAAGKDIYALLTLFFHQFPEYAKQDFHIAGESYAGHYIPVFANEILSHEDRNINLKSVLIGNGLTDGYTQYEYYRPMACGEGGYPSVLSESECQSMDNALPRCQSLIKGCYESGSAWSCVPASIYCNNAMMGPYQRTGRNVYDIRGNCEDSSNLCYSGLGYIAEYLNRQDVQDALGAEVSSYDSCNMDINRNFLFAGDWMQPYHQVVPNLLEKIPVLIYAGDADFICNWLGNQAWTNKLEWPGHKDFKNADIKNLKVEGKEYGKIKTSGNFTFMQIYGAGHMVPMDQPEASSDFFNRWLGGEWF.

A signal peptide spans 1–17 (MRLSTSALVLGAASSAV). Residues 18–124 (AFDQKVLGDL…RLDNYNLRAK (107 aa)) constitute a propeptide that is removed on maturation. Intrachain disulfides connect Cys178–Cys418, Cys312–Cys326, Cys336–Cys359, Cys343–Cys352, and Cys381–Cys388. The N-linked (GlcNAc...) asparagine glycan is linked to Asn209. Residue Ser265 is part of the active site. Asp457 is an active-site residue. The N-linked (GlcNAc...) asparagine glycan is linked to Asn503. The active site involves His514.

It belongs to the peptidase S10 family.

It localises to the vacuole. The catalysed reaction is Release of a C-terminal amino acid with broad specificity.. Functionally, vacuolar carboxypeptidase involved in degradation of small peptides. Digests preferentially peptides containing an aliphatic or hydrophobic residue in P1' position, as well as methionine, leucine or phenylalanine in P1 position of ester substrate. The protein is Carboxypeptidase Y homolog A (CPYA) of Fusarium vanettenii (strain ATCC MYA-4622 / CBS 123669 / FGSC 9596 / NRRL 45880 / 77-13-4) (Fusarium solani subsp. pisi).